Consider the following 177-residue polypeptide: NAD(P)H-quinone oxidoreductase subunit 6, chloroplastic (177 aa).

5 consecutive transmembrane segments (helical) span residues 10–30 (FLLV…VLLT), 32–52 (PIFS…FYTP), 61–81 (AQLL…VMFM), 92–112 (LWTV…VSLI), and 152–172 (FFLP…GAIS).

Belongs to the complex I subunit 6 family. In terms of assembly, NDH is composed of at least 16 different subunits, 5 of which are encoded in the nucleus.

It is found in the plastid. It localises to the chloroplast thylakoid membrane. The catalysed reaction is a plastoquinone + NADH + (n+1) H(+)(in) = a plastoquinol + NAD(+) + n H(+)(out). The enzyme catalyses a plastoquinone + NADPH + (n+1) H(+)(in) = a plastoquinol + NADP(+) + n H(+)(out). Functionally, NDH shuttles electrons from NAD(P)H:plastoquinone, via FMN and iron-sulfur (Fe-S) centers, to quinones in the photosynthetic chain and possibly in a chloroplast respiratory chain. The immediate electron acceptor for the enzyme in this species is believed to be plastoquinone. Couples the redox reaction to proton translocation, and thus conserves the redox energy in a proton gradient. This chain is NAD(P)H-quinone oxidoreductase subunit 6, chloroplastic (ndhG), found in Ranunculus macranthus (Large buttercup).